A 699-amino-acid polypeptide reads, in one-letter code: Polyribonucleotide nucleotidyltransferase (699 aa).

Residues Asp485 and Asp491 each contribute to the Mg(2+) site. The region spanning 552-611 is the KH domain; sequence PRITTIKINPEKIRDVIGKGGAVIRALTEETGTTIELEDDGTVKIASSNGEATKEAIRRI. The S1 motif domain maps to 621–689; it reads GRIYNGKVIR…RQGRVRLSIK (69 aa).

It belongs to the polyribonucleotide nucleotidyltransferase family. Component of the RNA degradosome, which is a multiprotein complex involved in RNA processing and mRNA degradation. Requires Mg(2+) as cofactor.

It localises to the cytoplasm. The enzyme catalyses RNA(n+1) + phosphate = RNA(n) + a ribonucleoside 5'-diphosphate. Functionally, involved in mRNA degradation. Catalyzes the phosphorolysis of single-stranded polyribonucleotides processively in the 3'- to 5'-direction. The polypeptide is Polyribonucleotide nucleotidyltransferase (Shewanella sp. (strain MR-7)).